The chain runs to 146 residues: Small ribosomal subunit protein uS13 (146 aa).

The tract at residues alanine 119 to arginine 146 is disordered.

It belongs to the universal ribosomal protein uS13 family. As to quaternary structure, part of the 30S ribosomal subunit. Forms a loose heterodimer with protein S19. Forms two bridges to the 50S subunit in the 70S ribosome.

Its function is as follows. Located at the top of the head of the 30S subunit, it contacts several helices of the 16S rRNA. In the 70S ribosome it contacts the 23S rRNA (bridge B1a) and protein L5 of the 50S subunit (bridge B1b), connecting the 2 subunits; these bridges are implicated in subunit movement. This chain is Small ribosomal subunit protein uS13, found in Archaeoglobus fulgidus (strain ATCC 49558 / DSM 4304 / JCM 9628 / NBRC 100126 / VC-16).